Consider the following 272-residue polypeptide: Glutamate 5-kinase (272 aa).

An ATP-binding site is contributed by Lys15. Substrate-binding residues include Ser55, Asp142, and Asn158. Residues 178–179 (SD) and 220–226 (TGGMLSK) each bind ATP.

Belongs to the glutamate 5-kinase family.

It is found in the cytoplasm. It catalyses the reaction L-glutamate + ATP = L-glutamyl 5-phosphate + ADP. The protein operates within amino-acid biosynthesis; L-proline biosynthesis; L-glutamate 5-semialdehyde from L-glutamate: step 1/2. In terms of biological role, catalyzes the transfer of a phosphate group to glutamate to form L-glutamate 5-phosphate. In Streptococcus equi subsp. zooepidemicus (strain H70), this protein is Glutamate 5-kinase.